Here is a 287-residue protein sequence, read N- to C-terminus: ATP synthase gamma chain (287 aa).

This sequence belongs to the ATPase gamma chain family. As to quaternary structure, F-type ATPases have 2 components, CF(1) - the catalytic core - and CF(0) - the membrane proton channel. CF(1) has five subunits: alpha(3), beta(3), gamma(1), delta(1), epsilon(1). CF(0) has three main subunits: a, b and c.

Its subcellular location is the cell inner membrane. Produces ATP from ADP in the presence of a proton gradient across the membrane. The gamma chain is believed to be important in regulating ATPase activity and the flow of protons through the CF(0) complex. In Xanthomonas oryzae pv. oryzae (strain MAFF 311018), this protein is ATP synthase gamma chain.